The primary structure comprises 565 residues: Arginine--tRNA ligase (565 aa).

The 'HIGH' region motif lies at 121–131 (PNIAKPMGMGH).

The protein belongs to the class-I aminoacyl-tRNA synthetase family. Monomer.

Its subcellular location is the cytoplasm. The enzyme catalyses tRNA(Arg) + L-arginine + ATP = L-arginyl-tRNA(Arg) + AMP + diphosphate. This is Arginine--tRNA ligase from Lactobacillus delbrueckii subsp. bulgaricus (strain ATCC BAA-365 / Lb-18).